The primary structure comprises 339 residues: DNA-directed RNA polymerase subunit alpha (339 aa).

The segment at 1–233 is alpha N-terminal domain (alpha-NTD); that stretch reads MVREEVAGST…DLFLPFLHAE (233 aa). The segment at 264 to 339 is alpha C-terminal domain (alpha-CTD); that stretch reads KKGIPLNCIF…IDLLKNKLSF (76 aa).

Belongs to the RNA polymerase alpha chain family. As to quaternary structure, in plastids the minimal PEP RNA polymerase catalytic core is composed of four subunits: alpha, beta, beta', and beta''. When a (nuclear-encoded) sigma factor is associated with the core the holoenzyme is formed, which can initiate transcription.

It localises to the plastid. The protein localises to the chloroplast. It catalyses the reaction RNA(n) + a ribonucleoside 5'-triphosphate = RNA(n+1) + diphosphate. DNA-dependent RNA polymerase catalyzes the transcription of DNA into RNA using the four ribonucleoside triphosphates as substrates. This chain is DNA-directed RNA polymerase subunit alpha, found in Crithopsis delileana.